Here is a 277-residue protein sequence, read N- to C-terminus: Probable CCR4-associated factor 1 homolog 10 (277 aa).

Positions 40, 42, 166, and 235 each coordinate a divalent metal cation.

The protein belongs to the CAF1 family. As to quaternary structure, component of the CCR4-NOT complex, at least composed of CRR4 and CAF1 proteins. A divalent metal cation serves as cofactor.

The protein resides in the nucleus. It is found in the cytoplasm. It carries out the reaction Exonucleolytic cleavage of poly(A) to 5'-AMP.. Functionally, ubiquitous transcription factor required for a diverse set of processes. It is a component of the CCR4 complex involved in the control of gene expression. This Arabidopsis thaliana (Mouse-ear cress) protein is Probable CCR4-associated factor 1 homolog 10 (CAF1-10).